Consider the following 384-residue polypeptide: Fructose-1,6-bisphosphate aldolase/phosphatase (384 aa).

Residue D11 is the Proton acceptor; for FBP phosphatase activity of the active site. Mg(2+) is bound by residues D11, H18, D52, and D53. H18 serves as a coordination point for beta-D-fructose 1,6-bisphosphate. H18 is a binding site for dihydroxyacetone phosphate. Residue Y90 coordinates beta-D-fructose 1,6-bisphosphate. Q94 is a binding site for Mg(2+). 103 to 104 (GN) contributes to the beta-D-fructose 1,6-bisphosphate binding site. Residue D131 participates in Mg(2+) binding. K132 contributes to the beta-D-fructose 1,6-bisphosphate binding site. A dihydroxyacetone phosphate-binding site is contributed by K132. The Proton donor/acceptor; for FBP aldolase activity role is filled by Y228. Mg(2+)-binding residues include K231, D232, and D233. Catalysis depends on K231, which acts as the Schiff-base intermediate with DHAP; for FBP aldolase activity. Residues 241-242 (QH), R265, D286, and Y347 each bind beta-D-fructose 1,6-bisphosphate. Dihydroxyacetone phosphate is bound by residues R265 and D286.

This sequence belongs to the FBP aldolase/phosphatase family. Homooctamer; dimer of tetramers. Requires Mg(2+) as cofactor.

The enzyme catalyses beta-D-fructose 1,6-bisphosphate + H2O = beta-D-fructose 6-phosphate + phosphate. It catalyses the reaction beta-D-fructose 1,6-bisphosphate = D-glyceraldehyde 3-phosphate + dihydroxyacetone phosphate. It participates in carbohydrate biosynthesis; gluconeogenesis. Its function is as follows. Catalyzes two subsequent steps in gluconeogenesis: the aldol condensation of dihydroxyacetone phosphate (DHAP) and glyceraldehyde-3-phosphate (GA3P) to fructose-1,6-bisphosphate (FBP), and the dephosphorylation of FBP to fructose-6-phosphate (F6P). The sequence is that of Fructose-1,6-bisphosphate aldolase/phosphatase from Sulfurisphaera tokodaii (strain DSM 16993 / JCM 10545 / NBRC 100140 / 7) (Sulfolobus tokodaii).